Consider the following 86-residue polypeptide: MKEGIHPNYREVVFQDMSSDFKFITRSTIQTKEMITLDGKEYPLAKIEVSSESHPFYTGQQKVLDTAGRVEKFRNKFGSKIGKAAK.

The protein belongs to the bacterial ribosomal protein bL31 family. Type B subfamily. In terms of assembly, part of the 50S ribosomal subunit.

This Ralstonia pickettii (strain 12J) protein is Large ribosomal subunit protein bL31B.